The chain runs to 92 residues: UPF0250 protein CGSHiEE_03170 (92 aa).

Belongs to the UPF0250 family.

This chain is UPF0250 protein CGSHiEE_03170, found in Haemophilus influenzae (strain PittEE).